Here is a 225-residue protein sequence, read N- to C-terminus: Protein-L-isoaspartate O-methyltransferase (225 aa).

The active site involves serine 75.

It belongs to the methyltransferase superfamily. L-isoaspartyl/D-aspartyl protein methyltransferase family.

It localises to the cytoplasm. It catalyses the reaction [protein]-L-isoaspartate + S-adenosyl-L-methionine = [protein]-L-isoaspartate alpha-methyl ester + S-adenosyl-L-homocysteine. In terms of biological role, catalyzes the methyl esterification of L-isoaspartyl residues in peptides and proteins that result from spontaneous decomposition of normal L-aspartyl and L-asparaginyl residues. It plays a role in the repair and/or degradation of damaged proteins. This Xanthomonas oryzae pv. oryzae (strain PXO99A) protein is Protein-L-isoaspartate O-methyltransferase.